Consider the following 469-residue polypeptide: Swarming motility regulation sensor protein RssA (469 aa).

2 helical membrane-spanning segments follow: residues 12–32 (IIFQVLAILLLWGLLVAWVKY) and 167–187 (VPLLGILAAIIVTLLFTAYFS). The Histidine kinase domain occupies 245–459 (DAAHELRTPI…GFIIDLPESY (215 aa)). H248 carries the phosphohistidine; by autocatalysis modification.

It localises to the cell inner membrane. It carries out the reaction ATP + protein L-histidine = ADP + protein N-phospho-L-histidine.. Member of the two-component regulatory system RssA/RssB involved in regulation of swarming motility which has been shown to be inhibited by saturated fatty acids. RssA/RssB regulates cellular fatty acid composition, hemolysin production and cell surface topography. RssA/RssB negatively regulates the activity of SlhBA. It can also act as a negative regulator for the control of the swarming initiation. This is Swarming motility regulation sensor protein RssA (rssA) from Serratia marcescens.